The chain runs to 506 residues: Maturase K (506 aa).

This sequence belongs to the intron maturase 2 family. MatK subfamily.

The protein resides in the plastid. It is found in the chloroplast. Usually encoded in the trnK tRNA gene intron. Probably assists in splicing its own and other chloroplast group II introns. In Styphnolobium japonicum (Japanese pagoda tree), this protein is Maturase K.